Consider the following 146-residue polypeptide: MAIYGIGTDVVQISRIAAVLERTGGRFAEKVLGPDELRVFHARRARSEARGIAFLATRFSAKEAFSKAIGLGMHWPMTWRALQTLNQRSGEPYVVASGELADWLAARGITARVTVSDERDYAVSFVVTETDAAPPPAPAPVSRTTS.

Residues aspartate 9 and glutamate 63 each contribute to the Mg(2+) site.

It belongs to the P-Pant transferase superfamily. AcpS family. It depends on Mg(2+) as a cofactor.

It is found in the cytoplasm. The catalysed reaction is apo-[ACP] + CoA = holo-[ACP] + adenosine 3',5'-bisphosphate + H(+). Its function is as follows. Transfers the 4'-phosphopantetheine moiety from coenzyme A to a Ser of acyl-carrier-protein. The polypeptide is Holo-[acyl-carrier-protein] synthase (Burkholderia ambifaria (strain ATCC BAA-244 / DSM 16087 / CCUG 44356 / LMG 19182 / AMMD) (Burkholderia cepacia (strain AMMD))).